A 109-amino-acid polypeptide reads, in one-letter code: Putative glutaredoxin-C11 (109 aa).

Positions 2-108 (AEMVARLASE…PLLKSAGALW (107 aa)) constitute a Glutaredoxin domain. Cysteine 22 and cysteine 25 are oxidised to a cystine. Residues 106–109 (ALWL) carry the Responsive for interaction with TGA factors motif.

It belongs to the glutaredoxin family. CC-type subfamily.

It is found in the cytoplasm. It localises to the nucleus. Functionally, has a glutathione-disulfide oxidoreductase activity in the presence of NADPH and glutathione reductase. Reduces low molecular weight disulfides and proteins. In Oryza sativa subsp. japonica (Rice), this protein is Putative glutaredoxin-C11 (GRXC11).